A 207-amino-acid chain; its full sequence is Oligoribonuclease (207 aa).

The Exonuclease domain maps to 8 to 172 (LVWIDCEMTG…ADILESVREL (165 aa)). Y129 is an active-site residue.

This sequence belongs to the oligoribonuclease family.

Its subcellular location is the cytoplasm. 3'-to-5' exoribonuclease specific for small oligoribonucleotides. This is Oligoribonuclease from Leifsonia xyli subsp. xyli (strain CTCB07).